A 453-amino-acid polypeptide reads, in one-letter code: tRNA modification GTPase MnmE (453 aa).

(6S)-5-formyl-5,6,7,8-tetrahydrofolate-binding residues include Arg-22, Glu-79, and Lys-119. In terms of domain architecture, TrmE-type G spans 215–376 (GMKVVIAGRP…LRNHLKECMG (162 aa)). Residue Asn-225 participates in K(+) binding. Residues 225–230 (NAGKSS), 244–250 (TDIAGTT), 269–272 (DTAG), and 334–337 (NKAD) each bind GTP. A Mg(2+)-binding site is contributed by Ser-229. K(+) is bound by residues Thr-244, Ile-246, and Thr-249. Thr-250 provides a ligand contact to Mg(2+). Lys-453 contributes to the (6S)-5-formyl-5,6,7,8-tetrahydrofolate binding site.

This sequence belongs to the TRAFAC class TrmE-Era-EngA-EngB-Septin-like GTPase superfamily. TrmE GTPase family. As to quaternary structure, homodimer. Heterotetramer of two MnmE and two MnmG subunits. K(+) serves as cofactor.

The protein localises to the cytoplasm. In terms of biological role, exhibits a very high intrinsic GTPase hydrolysis rate. Involved in the addition of a carboxymethylaminomethyl (cmnm) group at the wobble position (U34) of certain tRNAs, forming tRNA-cmnm(5)s(2)U34. The chain is tRNA modification GTPase MnmE from Vibrio parahaemolyticus serotype O3:K6 (strain RIMD 2210633).